A 192-amino-acid polypeptide reads, in one-letter code: Adenylate kinase (192 aa).

10 to 18 is a binding site for ATP; that stretch reads GVPGVGGTT.

This sequence belongs to the archaeal adenylate kinase family. Monomer.

It localises to the cytoplasm. It catalyses the reaction AMP + ATP = 2 ADP. The sequence is that of Adenylate kinase from Methanococcus maripaludis (strain DSM 14266 / JCM 13030 / NBRC 101832 / S2 / LL).